The chain runs to 249 residues: 5'-nucleotidase SurE (249 aa).

A divalent metal cation-binding residues include D8, D9, S39, and N91.

Belongs to the SurE nucleotidase family. It depends on a divalent metal cation as a cofactor.

Its subcellular location is the cytoplasm. It catalyses the reaction a ribonucleoside 5'-phosphate + H2O = a ribonucleoside + phosphate. In terms of biological role, nucleotidase that shows phosphatase activity on nucleoside 5'-monophosphates. In Haemophilus influenzae (strain PittGG), this protein is 5'-nucleotidase SurE.